The sequence spans 158 residues: Deoxyuridine 5'-triphosphate nucleotidohydrolase (158 aa).

Substrate-binding positions include 75-77, asparagine 88, 92-94, and lysine 102; these read RSG and TVD.

The protein belongs to the dUTPase family. Requires Mg(2+) as cofactor.

It carries out the reaction dUTP + H2O = dUMP + diphosphate + H(+). The protein operates within pyrimidine metabolism; dUMP biosynthesis; dUMP from dCTP (dUTP route): step 2/2. Its function is as follows. This enzyme is involved in nucleotide metabolism: it produces dUMP, the immediate precursor of thymidine nucleotides and it decreases the intracellular concentration of dUTP so that uracil cannot be incorporated into DNA. This chain is Deoxyuridine 5'-triphosphate nucleotidohydrolase, found in Bifidobacterium longum subsp. infantis (strain ATCC 15697 / DSM 20088 / JCM 1222 / NCTC 11817 / S12).